The chain runs to 319 residues: Aliphatic sulfonates import ATP-binding protein SsuB 1 (319 aa).

In terms of domain architecture, ABC transporter spans 63–282 (VTLSGVSKRF…ARASAAFAAL (220 aa)). Position 95 to 102 (95 to 102 (GRSGCGKS)) interacts with ATP.

Belongs to the ABC transporter superfamily. Aliphatic sulfonates importer (TC 3.A.1.17.2) family. In terms of assembly, the complex is composed of two ATP-binding proteins (SsuB), two transmembrane proteins (SsuC) and a solute-binding protein (SsuA).

The protein localises to the cell inner membrane. The enzyme catalyses ATP + H2O + aliphatic sulfonate-[sulfonate-binding protein]Side 1 = ADP + phosphate + aliphatic sulfonateSide 2 + [sulfonate-binding protein]Side 1.. Its function is as follows. Part of the ABC transporter complex SsuABC involved in aliphatic sulfonates import. Responsible for energy coupling to the transport system. The polypeptide is Aliphatic sulfonates import ATP-binding protein SsuB 1 (Burkholderia cenocepacia (strain HI2424)).